We begin with the raw amino-acid sequence, 474 residues long: Cryptochrome DASH (474 aa).

Positions 2–136 (DTAVVWFRDD…ALRQRWTHTL (135 aa)) constitute a Photolyase/cryptochrome alpha/beta domain. Over residues 161–171 (EAAATVRDPRS) the composition is skewed to basic and acidic residues. Positions 161-202 (EAAATVRDPRSAPETVPTPDGLTPGPVPTVESLGVSEPPTDD) are disordered.

The protein belongs to the DNA photolyase class-1 family. FAD is required as a cofactor. Requires (6R)-5,10-methylene-5,6,7,8-tetrahydrofolate as cofactor.

May have a photoreceptor function. Binds DNA; probably functions as a transcriptional repressor. The chain is Cryptochrome DASH (cry) from Natronomonas pharaonis (strain ATCC 35678 / DSM 2160 / CIP 103997 / JCM 8858 / NBRC 14720 / NCIMB 2260 / Gabara) (Halobacterium pharaonis).